A 110-amino-acid chain; its full sequence is V-type proton ATPase subunit G 1 (110 aa).

The protein belongs to the V-ATPase G subunit family. As to quaternary structure, V-ATPase is a heteromultimeric enzyme composed of a peripheral catalytic V1 complex (components A to H) attached to an integral membrane V0 proton pore complex (components: a, c, c', c'' and d).

Catalytic subunit of the peripheral V1 complex of vacuolar ATPase (V-ATPase). V-ATPase is responsible for acidifying a variety of intracellular compartments in eukaryotic cells. This is V-type proton ATPase subunit G 1 (VATG1) from Nicotiana tabacum (Common tobacco).